Reading from the N-terminus, the 241-residue chain is MGQKVSPNVLRLGIVRDWEDTWYAEKDQYVKWLDQDIKIREGVLKLLKDAAVSKIKIERTNSNITLIIRTARPAIVLGQEGKNVSNIATAVQKIAKDRNLKVEVKVIEVKNPDADATLVARWIGEQITNRASFRTVQKLAIRKALKAGVKGIKTSVSGRLGGVEMARTEGYIEGSVPLSTLRADIDYALYEAPTTYGQIGVKVWINHGEVIGGQSQRVSEKAPMNNDRRFNNKNNNRGGRK.

Residues I39–E108 form the KH type-2 domain. The disordered stretch occupies residues S215–K241. Residues N232–K241 show a composition bias toward low complexity.

Belongs to the universal ribosomal protein uS3 family. As to quaternary structure, part of the 30S ribosomal subunit. Forms a tight complex with proteins S10 and S14.

Functionally, binds the lower part of the 30S subunit head. Binds mRNA in the 70S ribosome, positioning it for translation. This chain is Small ribosomal subunit protein uS3, found in Mesoplasma florum (strain ATCC 33453 / NBRC 100688 / NCTC 11704 / L1) (Acholeplasma florum).